Here is a 353-residue protein sequence, read N- to C-terminus: Histidinol-phosphate aminotransferase (353 aa).

Residue lysine 211 is modified to N6-(pyridoxal phosphate)lysine.

Belongs to the class-II pyridoxal-phosphate-dependent aminotransferase family. Histidinol-phosphate aminotransferase subfamily. As to quaternary structure, homodimer. It depends on pyridoxal 5'-phosphate as a cofactor.

The catalysed reaction is L-histidinol phosphate + 2-oxoglutarate = 3-(imidazol-4-yl)-2-oxopropyl phosphate + L-glutamate. Its pathway is amino-acid biosynthesis; L-histidine biosynthesis; L-histidine from 5-phospho-alpha-D-ribose 1-diphosphate: step 7/9. The polypeptide is Histidinol-phosphate aminotransferase (Klebsiella pneumoniae (strain 342)).